The chain runs to 870 residues: Valine--tRNA ligase (870 aa).

A 'HIGH' region motif is present at residues 42-52 (PNVTGVLHIGH). A 'KMSKS' region motif is present at residues 527-531 (KMSKS). Lys530 provides a ligand contact to ATP. The stretch at 800–870 (LENVDLSGIL…ISVELQNLRG (71 aa)) forms a coiled coil.

Belongs to the class-I aminoacyl-tRNA synthetase family. ValS type 1 subfamily. In terms of assembly, monomer.

It is found in the cytoplasm. The catalysed reaction is tRNA(Val) + L-valine + ATP = L-valyl-tRNA(Val) + AMP + diphosphate. In terms of biological role, catalyzes the attachment of valine to tRNA(Val). As ValRS can inadvertently accommodate and process structurally similar amino acids such as threonine, to avoid such errors, it has a 'posttransfer' editing activity that hydrolyzes mischarged Thr-tRNA(Val) in a tRNA-dependent manner. The protein is Valine--tRNA ligase of Campylobacter jejuni (strain RM1221).